An 80-amino-acid chain; its full sequence is SPbeta prophage-derived thioredoxin-like protein YosR (80 aa).

Residues 1 to 80 (MRLIKLEQPN…ELDELLKELR (80 aa)) enclose the Thioredoxin domain. A disulfide bridge connects residues Cys-11 and Cys-14.

It belongs to the thioredoxin family.

The protein is SPbeta prophage-derived thioredoxin-like protein YosR (yosR) of Bacillus subtilis (strain 168).